A 404-amino-acid chain; its full sequence is uncharacterized protein (404 aa).

The next 2 membrane-spanning stretches (helical) occupy residues 35-55 (ILFSNIKSILAIIWKYSFTFL) and 92-112 (EDIWASTIILGVIIGYLISSI).

The protein localises to the membrane. This is an uncharacterized protein from Saccharomyces cerevisiae (strain ATCC 204508 / S288c) (Baker's yeast).